Reading from the N-terminus, the 249-residue chain is Methylthioribulose-1-phosphate dehydratase (249 aa).

Zn(2+) is bound by residues His103 and His105.

The protein belongs to the aldolase class II family. MtnB subfamily. It depends on Zn(2+) as a cofactor.

It catalyses the reaction 5-(methylsulfanyl)-D-ribulose 1-phosphate = 5-methylsulfanyl-2,3-dioxopentyl phosphate + H2O. The protein operates within amino-acid biosynthesis; L-methionine biosynthesis via salvage pathway; L-methionine from S-methyl-5-thio-alpha-D-ribose 1-phosphate: step 2/6. Functionally, catalyzes the dehydration of methylthioribulose-1-phosphate (MTRu-1-P) into 2,3-diketo-5-methylthiopentyl-1-phosphate (DK-MTP-1-P). This Leptospira interrogans serogroup Icterohaemorrhagiae serovar Lai (strain 56601) protein is Methylthioribulose-1-phosphate dehydratase.